We begin with the raw amino-acid sequence, 505 residues long: MSEHFILQPGQLSLLSIKQILDEELSCVLAENAFELIRASHQTVKKVIDEKKTVYGINTGFGSLANQTISSDCLKELQRNIVLSHACGTGKLLPDDVVALILLLKINNLSQGYSGVRLELINALIALFNHKVYPCIPSKGSVGASGDLVPLAHLSLPLLGEGEVRHQGQVISAEEGLKLAGLKPLELEAKEGLALLNGLQVSTALALSALFISETLFETAIISGSLSVDAASGSDVPFDDRIHQIRGHQAQISAARMYRNLLAGSQIRESHRYCNRVQDPYSLRCQPQIMGAVLHQMEFVGQTLQVEANAISDNPLVFAEQGDILSGGNFHGEIIAMAADNLALALSEIGGSAERRIALLIDKNFSGLPAFLVRESGLNSGFMIAHVTAASCASDNKALAHPHSVDSLPTSANQEDHVSMATSAARRLHEMIDNTSTILAIELLAACQGLEFHKPLKTSPQLDKIYQSVRSVVKEYDKDRYFAPDIEKIKKKILDKEFSLLTLTN.

A cross-link (5-imidazolinone (Ala-Gly)) is located at residues 144 to 146 (ASG). Ser-145 bears the 2,3-didehydroalanine (Ser) mark.

It belongs to the PAL/histidase family. In terms of processing, contains an active site 4-methylidene-imidazol-5-one (MIO), which is formed autocatalytically by cyclization and dehydration of residues Ala-Ser-Gly.

The protein resides in the cytoplasm. The catalysed reaction is L-histidine = trans-urocanate + NH4(+). Its pathway is amino-acid degradation; L-histidine degradation into L-glutamate; N-formimidoyl-L-glutamate from L-histidine: step 1/3. The polypeptide is Histidine ammonia-lyase (Legionella pneumophila (strain Corby)).